Reading from the N-terminus, the 122-residue chain is Large ribosomal subunit protein uL18 (122 aa).

Residues M1–R11 are compositionally biased toward basic and acidic residues. The segment at M1–I22 is disordered. Residues D12–I22 are compositionally biased toward basic residues.

The protein belongs to the universal ribosomal protein uL18 family. As to quaternary structure, part of the 50S ribosomal subunit; part of the 5S rRNA/L5/L18/L25 subcomplex. Contacts the 5S and 23S rRNAs.

Its function is as follows. This is one of the proteins that bind and probably mediate the attachment of the 5S RNA into the large ribosomal subunit, where it forms part of the central protuberance. This chain is Large ribosomal subunit protein uL18, found in Pelotomaculum thermopropionicum (strain DSM 13744 / JCM 10971 / SI).